We begin with the raw amino-acid sequence, 311 residues long: Ribonuclease HIII (311 aa).

The 217-residue stretch at Met95–Lys311 folds into the RNase H type-2 domain. 3 residues coordinate a divalent metal cation: Asp101, Glu102, and Asp206.

It belongs to the RNase HII family. RnhC subfamily. Mn(2+) is required as a cofactor. The cofactor is Mg(2+).

The protein resides in the cytoplasm. It carries out the reaction Endonucleolytic cleavage to 5'-phosphomonoester.. Its function is as follows. Endonuclease that specifically degrades the RNA of RNA-DNA hybrids. The protein is Ribonuclease HIII of Bacillus anthracis (strain A0248).